A 497-amino-acid chain; its full sequence is Glycerol kinase (497 aa).

An ADP-binding site is contributed by threonine 13. Residues threonine 13, threonine 14, and serine 15 each contribute to the ATP site. Residue threonine 13 coordinates sn-glycerol 3-phosphate. Residue arginine 17 participates in ADP binding. Residues arginine 83, glutamate 84, and tyrosine 135 each coordinate sn-glycerol 3-phosphate. 3 residues coordinate glycerol: arginine 83, glutamate 84, and tyrosine 135. Position 231 is a phosphohistidine; by HPr (histidine 231). Aspartate 245 contacts sn-glycerol 3-phosphate. 2 residues coordinate glycerol: aspartate 245 and glutamine 246. Positions 267 and 310 each coordinate ADP. Positions 267, 310, 314, and 411 each coordinate ATP. Residues glycine 411 and asparagine 415 each contribute to the ADP site.

It belongs to the FGGY kinase family. As to quaternary structure, homotetramer and homodimer (in equilibrium). Post-translationally, the phosphoenolpyruvate-dependent sugar phosphotransferase system (PTS), including enzyme I, and histidine-containing protein (HPr) are required for the phosphorylation, which leads to the activation of the enzyme.

It catalyses the reaction glycerol + ATP = sn-glycerol 3-phosphate + ADP + H(+). It participates in polyol metabolism; glycerol degradation via glycerol kinase pathway; sn-glycerol 3-phosphate from glycerol: step 1/1. Activated by phosphorylation and inhibited by fructose 1,6-bisphosphate (FBP). Key enzyme in the regulation of glycerol uptake and metabolism. Catalyzes the phosphorylation of glycerol to yield sn-glycerol 3-phosphate. The sequence is that of Glycerol kinase from Halalkalibacterium halodurans (strain ATCC BAA-125 / DSM 18197 / FERM 7344 / JCM 9153 / C-125) (Bacillus halodurans).